A 147-amino-acid polypeptide reads, in one-letter code: Probable WRKY transcription factor 45 (147 aa).

The tract at residues 21-52 (TEFHGVDNSAQPTTSSEEKPRSKKKKKEREAR) is disordered. Positions 59-124 (SQVDILDDGY…YQGVHTHAVD (66 aa)) form a DNA-binding region, WRKY. The Zn(2+) site is built by cysteine 90, cysteine 95, histidine 119, and histidine 121.

This sequence belongs to the WRKY group I family.

The protein resides in the nucleus. Its function is as follows. Transcription factor. Interacts specifically with the W box (5'-(T)TGAC[CT]-3'), a frequently occurring elicitor-responsive cis-acting element. In Arabidopsis thaliana (Mouse-ear cress), this protein is Probable WRKY transcription factor 45 (WRKY45).